A 337-amino-acid chain; its full sequence is Phosphate acyltransferase (337 aa).

The protein belongs to the PlsX family. In terms of assembly, homodimer. Probably interacts with PlsY.

Its subcellular location is the cytoplasm. It catalyses the reaction a fatty acyl-[ACP] + phosphate = an acyl phosphate + holo-[ACP]. It participates in lipid metabolism; phospholipid metabolism. Catalyzes the reversible formation of acyl-phosphate (acyl-PO(4)) from acyl-[acyl-carrier-protein] (acyl-ACP). This enzyme utilizes acyl-ACP as fatty acyl donor, but not acyl-CoA. This Acidobacterium capsulatum (strain ATCC 51196 / DSM 11244 / BCRC 80197 / JCM 7670 / NBRC 15755 / NCIMB 13165 / 161) protein is Phosphate acyltransferase.